We begin with the raw amino-acid sequence, 404 residues long: Cysteine desulfurase IscS (404 aa).

Residues 75 to 76 (AT), Asn155, Gln183, and 203 to 205 (SGH) contribute to the pyridoxal 5'-phosphate site. Lys206 bears the N6-(pyridoxal phosphate)lysine mark. Thr243 is a binding site for pyridoxal 5'-phosphate. Residue Cys328 is the Cysteine persulfide intermediate of the active site. [2Fe-2S] cluster is bound at residue Cys328.

Belongs to the class-V pyridoxal-phosphate-dependent aminotransferase family. NifS/IscS subfamily. In terms of assembly, homodimer. Forms a heterotetramer with IscU, interacts with other sulfur acceptors. Requires pyridoxal 5'-phosphate as cofactor.

The protein resides in the cytoplasm. The catalysed reaction is (sulfur carrier)-H + L-cysteine = (sulfur carrier)-SH + L-alanine. The protein operates within cofactor biosynthesis; iron-sulfur cluster biosynthesis. Master enzyme that delivers sulfur to a number of partners involved in Fe-S cluster assembly, tRNA modification or cofactor biosynthesis. Catalyzes the removal of elemental sulfur and selenium atoms from cysteine and selenocysteine to produce alanine. Functions as a sulfur delivery protein for Fe-S cluster synthesis onto IscU, an Fe-S scaffold assembly protein, as well as other S acceptor proteins. Also functions as a selenium delivery protein in the pathway for the biosynthesis of selenophosphate. This chain is Cysteine desulfurase IscS, found in Escherichia coli (strain K12 / DH10B).